The following is a 109-amino-acid chain: V-type proton ATPase 16 kDa proteolipid subunit (109 aa).

A helical membrane pass occupies residues 1–20; sequence VPVVMAGVLGIYGLIIAVII. Residues 21–39 are Lumenal-facing; that stretch reads STGINPKAKPYYLFDGYAH. Residues 40–61 form a helical membrane-spanning segment; sequence LSSGLACGLAGLAAGMAIGIVG. At 62 to 73 the chain is on the cytoplasmic side; the sequence is DAGVRANAQQPK. Residues 74-99 traverse the membrane as a helical segment; that stretch reads LFVGMILILIFAEALALYGLIVGIIL. Over 100-109 the chain is Lumenal; sequence SSRAGQSRAD.

Belongs to the V-ATPase proteolipid subunit family. In terms of assembly, V-ATPase is a heteromultimeric enzyme composed of a peripheral catalytic V1 complex (main components: subunits A, B, C, D, E, and F) attached to an integral membrane V0 proton pore complex (main component: the proteolipid protein; which is present as a hexamer that forms the proton-conducting pore). High expression in the mesocotyl tip of etiolated seedlings compared to the base.

It is found in the vacuole membrane. Proton-conducting pore forming subunit of the membrane integral V0 complex of vacuolar ATPase. V-ATPase is responsible for acidifying a variety of intracellular compartments in eukaryotic cells. The protein is V-type proton ATPase 16 kDa proteolipid subunit of Zea mays (Maize).